The sequence spans 347 residues: Dihydroorotase (347 aa).

2 residues coordinate Zn(2+): His-14 and His-16. Substrate contacts are provided by residues 16–18 (HLR) and Asn-42. Zn(2+) contacts are provided by Lys-100, His-137, and His-175. Lys-100 is subject to N6-carboxylysine. His-137 lines the substrate pocket. Leu-220 is a substrate binding site. A Zn(2+)-binding site is contributed by Asp-248. Residue Asp-248 is part of the active site. The substrate site is built by His-252 and Ala-264.

Belongs to the metallo-dependent hydrolases superfamily. DHOase family. Class II DHOase subfamily. As to quaternary structure, homodimer. Requires Zn(2+) as cofactor.

It carries out the reaction (S)-dihydroorotate + H2O = N-carbamoyl-L-aspartate + H(+). It participates in pyrimidine metabolism; UMP biosynthesis via de novo pathway; (S)-dihydroorotate from bicarbonate: step 3/3. Functionally, catalyzes the reversible cyclization of carbamoyl aspartate to dihydroorotate. This Pseudomonas syringae pv. tomato (strain ATCC BAA-871 / DC3000) protein is Dihydroorotase.